The chain runs to 129 residues: uncharacterized protein (129 aa).

A helical transmembrane segment spans residues 33-50 (MGGNVMWFIALLFALLIA).

The protein resides in the membrane. This is an uncharacterized protein from Saccharomyces cerevisiae (strain ATCC 204508 / S288c) (Baker's yeast).